A 105-amino-acid chain; its full sequence is Flagellar transcriptional regulator FlhD (105 aa).

Belongs to the FlhD family. Homodimer; disulfide-linked. Forms a heterohexamer composed of two FlhC and four FlhD subunits. Each FlhC binds a FlhD dimer, forming a heterotrimer, and a hexamer assembles by dimerization of two heterotrimers.

It localises to the cytoplasm. Functions in complex with FlhC as a master transcriptional regulator that regulates transcription of several flagellar and non-flagellar operons by binding to their promoter region. Activates expression of class 2 flagellar genes, including fliA, which is a flagellum-specific sigma factor that turns on the class 3 genes. Also regulates genes whose products function in a variety of physiological pathways. This chain is Flagellar transcriptional regulator FlhD, found in Nitrosomonas europaea (strain ATCC 19718 / CIP 103999 / KCTC 2705 / NBRC 14298).